Here is a 326-residue protein sequence, read N- to C-terminus: Tetraacyldisaccharide 4'-kinase (326 aa).

58–65 is an ATP binding site; it reads SVGGNGKT.

It belongs to the LpxK family.

It catalyses the reaction a lipid A disaccharide + ATP = a lipid IVA + ADP + H(+). It participates in glycolipid biosynthesis; lipid IV(A) biosynthesis; lipid IV(A) from (3R)-3-hydroxytetradecanoyl-[acyl-carrier-protein] and UDP-N-acetyl-alpha-D-glucosamine: step 6/6. Functionally, transfers the gamma-phosphate of ATP to the 4'-position of a tetraacyldisaccharide 1-phosphate intermediate (termed DS-1-P) to form tetraacyldisaccharide 1,4'-bis-phosphate (lipid IVA). The polypeptide is Tetraacyldisaccharide 4'-kinase (Pseudoalteromonas translucida (strain TAC 125)).